We begin with the raw amino-acid sequence, 169 residues long: Cell division inhibitor SulA (169 aa).

A ftsZ binding region spans residues alanine 106–tyrosine 112. Residues lysine 162–histidine 169 are lon protease binding.

This sequence belongs to the SulA family. Interacts with FtsZ. In terms of processing, is rapidly cleaved and degraded by the Lon protease once DNA damage is repaired.

Component of the SOS system and an inhibitor of cell division. Accumulation of SulA causes rapid cessation of cell division and the appearance of long, non-septate filaments. In the presence of GTP, binds a polymerization-competent form of FtsZ in a 1:1 ratio, thus inhibiting FtsZ polymerization and therefore preventing it from participating in the assembly of the Z ring. This mechanism prevents the premature segregation of damaged DNA to daughter cells during cell division. The polypeptide is Cell division inhibitor SulA (Salmonella agona (strain SL483)).